The sequence spans 68 residues: Medusin-DA1 (68 aa).

Positions 1-22 (MAFLKKSLFLVLFLGLVSLSVC) are cleaved as a signal peptide. Positions 23–48 (EEEKRENEEEKNEQEEDDREERNEEK) are excised as a propeptide. Residues 25–47 (EKRENEEEKNEQEEDDREERNEE) are disordered. The span at 31 to 41 (EEKNEQEEDDR) shows a compositional bias: acidic residues. L67 carries the leucine amide modification.

This sequence belongs to the frog skin active peptide (FSAP) family. Medusin subfamily. Expressed by the skin glands.

The protein resides in the secreted. In terms of biological role, antimicrobial peptide with activity against Gram-positive bacteria (S.aureus, MIC=32 mg/L) and fungi (C.albicans, MIC=64 mg/L). Shows weak hemolytic activity. The protein is Medusin-DA1 of Agalychnis dacnicolor (Giant Mexican leaf frog).